A 258-amino-acid polypeptide reads, in one-letter code: 4-hydroxy-tetrahydrodipicolinate reductase (258 aa).

10–15 (GCLGRM) lines the NAD(+) pocket. K38 contacts NADP(+). NAD(+) is bound by residues 89–91 (GTT) and 113–116 (AGNM). Residue H146 is the Proton donor/acceptor of the active site. Residue H147 coordinates (S)-2,3,4,5-tetrahydrodipicolinate. Residue K150 is the Proton donor of the active site. A (S)-2,3,4,5-tetrahydrodipicolinate-binding site is contributed by 156-157 (GT).

This sequence belongs to the DapB family.

The protein resides in the cytoplasm. The enzyme catalyses (S)-2,3,4,5-tetrahydrodipicolinate + NAD(+) + H2O = (2S,4S)-4-hydroxy-2,3,4,5-tetrahydrodipicolinate + NADH + H(+). It carries out the reaction (S)-2,3,4,5-tetrahydrodipicolinate + NADP(+) + H2O = (2S,4S)-4-hydroxy-2,3,4,5-tetrahydrodipicolinate + NADPH + H(+). The protein operates within amino-acid biosynthesis; L-lysine biosynthesis via DAP pathway; (S)-tetrahydrodipicolinate from L-aspartate: step 4/4. In terms of biological role, catalyzes the conversion of 4-hydroxy-tetrahydrodipicolinate (HTPA) to tetrahydrodipicolinate. The chain is 4-hydroxy-tetrahydrodipicolinate reductase from Pelagibacter ubique (strain HTCC1062).